Here is a 645-residue protein sequence, read N- to C-terminus: Translation factor GUF1, mitochondrial (645 aa).

The region spanning 44–228 (ENYRNFSIVA…AIIDRIPPPT (185 aa)) is the tr-type G domain. GTP-binding positions include 53 to 60 (AHVDHGKS), 120 to 124 (DTPGH), and 174 to 177 (NKID).

The protein belongs to the TRAFAC class translation factor GTPase superfamily. Classic translation factor GTPase family. LepA subfamily.

It localises to the mitochondrion inner membrane. The catalysed reaction is GTP + H2O = GDP + phosphate + H(+). In terms of biological role, promotes mitochondrial protein synthesis. May act as a fidelity factor of the translation reaction, by catalyzing a one-codon backward translocation of tRNAs on improperly translocated ribosomes. Binds to mitochondrial ribosomes in a GTP-dependent manner. The polypeptide is Translation factor GUF1, mitochondrial (Saccharomyces cerevisiae (strain RM11-1a) (Baker's yeast)).